The following is a 557-amino-acid chain: MKTILRASRIGRVILRYRLDALLEGTPAERWLRLAKPFVPRASAEIAAQSRGARLRLALQELGPIFVKFGQILSTRRDLIPPDVAEELTLLQDRVKPFDGEAARLIVERALGLPVSVAFAAFDTTPLASASIAQVHAATLPPDANGLRREVVVKVLRPDIERQIDADIALLHSLATLVERTHPRADKIRPREVVAEIEGTLSAELDLQREGANASVLRRFWEGSDDLYVPEVIWSHTAERALTLERVYGIPSDDVAKLDAAGIDRKALAAKGVRVFYTQVFRDNFFHADAHAGNIWVDSDPERCLNPRFIALDFGIMGQLSQEDQYYLAENFMAIFHKDYRRMAELHVEAGWMPSNVRIDELEAAARSVCEPYFTRPLSEISLAEVLIKLFRVAQRYELTLQPQLILLQKTLLNIEGVGRQLDPKLDIWAVARPVLERILRERYSPRRVLGELRKRLPEIMTHAPDMPRLVHSWLKQQVEGRHQLDIRSSELRALDLSLRKLQTRVVTAITGSGLLVVAAVLYGLHPNGWYLGTVPVWSWISGGAGSAALLIAWLRR.

Positions 121–509 constitute a Protein kinase domain; that stretch reads AFDTTPLASA…RKLQTRVVTA (389 aa). ATP is bound by residues 127-135 and Lys154; that span reads LASASIAQV. The Proton acceptor role is filled by Asp289. Helical transmembrane passes span 506–526 and 535–555; these read VVTA…YGLH and VPVW…IAWL.

It belongs to the ABC1 family. UbiB subfamily.

Its subcellular location is the cell inner membrane. It functions in the pathway cofactor biosynthesis; ubiquinone biosynthesis [regulation]. Its function is as follows. Is probably a protein kinase regulator of UbiI activity which is involved in aerobic coenzyme Q (ubiquinone) biosynthesis. This Xanthomonas campestris pv. campestris (strain B100) protein is Probable protein kinase UbiB.